Reading from the N-terminus, the 30-residue chain is LKDGYPTNSKGCKISGCLPGENKFCLNECQ.

The region spanning 2-30 (KDGYPTNSKGCKISGCLPGENKFCLNECQ) is the LCN-type CS-alpha/beta domain.

This sequence belongs to the long (4 C-C) scorpion toxin superfamily. Sodium channel inhibitor family. As to expression, expressed by the venom gland.

The protein localises to the secreted. Its function is as follows. Binds to sodium channels (Nav) and inhibits both the activation and inactivation of the activated channels, thereby blocking neuronal transmission. The protein is Babycurus-toxin 1 of Babycurus centrurimorphus (East African scorpion).